Reading from the N-terminus, the 1830-residue chain is Urea amidolyase (1830 aa).

ATP-binding positions include 115-122 (GAIVIGKT), K740, E823, and N858. Residues 625–1068 (PFETVLIANR…ATKILDSYDY (444 aa)) enclose the Biotin carboxylation domain. One can recognise an ATP-grasp domain in the interval 744–941 (REIAEKAGVP…LVEWMLRIAA (198 aa)). One can recognise a Biotinyl-binding domain in the interval 1752–1830 (AVEEEYPEDA…DAGDLVAVIQ (79 aa)). N6-biotinyllysine is present on K1796.

Belongs to the DUR1,2 family. Monomer. Biotin is required as a cofactor.

The enzyme catalyses urea + hydrogencarbonate + ATP = urea-1-carboxylate + ADP + phosphate + H(+). It catalyses the reaction urea-1-carboxylate + H2O + 3 H(+) = 2 NH4(+) + 2 CO2. It functions in the pathway nitrogen metabolism; urea degradation; CO(2) and NH(3) from urea (allophanate route): step 1/2. It participates in nitrogen metabolism; urea degradation; CO(2) and NH(3) from urea (allophanate route): step 2/2. In terms of biological role, involved in uracil catabolism. Hydrolysis of urea to ammonia and CO(2). In Lachancea kluyveri (Yeast), this protein is Urea amidolyase (DUR1,2).